Consider the following 409-residue polypeptide: Tyrosine--tRNA ligase (409 aa).

Tyrosine 39 contributes to the L-tyrosine binding site. A 'HIGH' region motif is present at residues 44–53; the sequence is PTAASLHVGS. Residues tyrosine 176 and glutamine 180 each contribute to the L-tyrosine site. Positions 236–240 match the 'KMSKS' region motif; it reads KMGKT. Lysine 239 contacts ATP. An S4 RNA-binding domain is found at 346–408; it reads ISLVDALVGL…GKKAHGVIQA (63 aa).

Belongs to the class-I aminoacyl-tRNA synthetase family. TyrS type 1 subfamily. Homodimer.

The protein resides in the cytoplasm. It carries out the reaction tRNA(Tyr) + L-tyrosine + ATP = L-tyrosyl-tRNA(Tyr) + AMP + diphosphate + H(+). Functionally, catalyzes the attachment of tyrosine to tRNA(Tyr) in a two-step reaction: tyrosine is first activated by ATP to form Tyr-AMP and then transferred to the acceptor end of tRNA(Tyr). This chain is Tyrosine--tRNA ligase, found in Zymomonas mobilis subsp. mobilis (strain ATCC 31821 / ZM4 / CP4).